We begin with the raw amino-acid sequence, 102 residues long: NADH-quinone oxidoreductase subunit K (102 aa).

Transmembrane regions (helical) follow at residues 6–26 (LIAMMILAAGLFAIGLFGVLA), 30–50 (IMFQLVALEVALSGPALGFVA), and 63–83 (MFILVLTLAAAEVAVGLALFL).

Belongs to the complex I subunit 4L family. In terms of assembly, NDH-1 is composed of 14 different subunits. Subunits NuoA, H, J, K, L, M, N constitute the membrane sector of the complex.

The protein localises to the cell inner membrane. It carries out the reaction a quinone + NADH + 5 H(+)(in) = a quinol + NAD(+) + 4 H(+)(out). Its function is as follows. NDH-1 shuttles electrons from NADH, via FMN and iron-sulfur (Fe-S) centers, to quinones in the respiratory chain. The immediate electron acceptor for the enzyme in this species is believed to be ubiquinone. Couples the redox reaction to proton translocation (for every two electrons transferred, four hydrogen ions are translocated across the cytoplasmic membrane), and thus conserves the redox energy in a proton gradient. In Rhodopseudomonas palustris (strain BisB5), this protein is NADH-quinone oxidoreductase subunit K.